The chain runs to 180 residues: Regulator of G-protein signaling 8 (180 aa).

At S26 the chain carries Phosphoserine. In terms of domain architecture, RGS spans 56–171 (SFDVLLSHKY…FLRSKMYLDL (116 aa)).

Interacts with GNAO1 and GNAI3.

It is found in the cell membrane. It localises to the membrane. Its subcellular location is the perikaryon. The protein localises to the cell projection. The protein resides in the dendrite. It is found in the nucleus. Its function is as follows. Regulates G protein-coupled receptor signaling cascades, including signaling via muscarinic acetylcholine receptor CHRM2 and dopamine receptor DRD2. Inhibits signal transduction by increasing the GTPase activity of G protein alpha subunits, thereby driving them into their inactive GDP-bound form. Modulates the activity of potassium channels that are activated in response to DRD2 and CHRM2 signaling. In Mus musculus (Mouse), this protein is Regulator of G-protein signaling 8 (Rgs8).